The primary structure comprises 433 residues: D-amino acid dehydrogenase (433 aa).

3 to 17 (VLVLGSGVIGTASAY) is an FAD binding site.

It belongs to the DadA oxidoreductase family. FAD is required as a cofactor.

The enzyme catalyses a D-alpha-amino acid + A + H2O = a 2-oxocarboxylate + AH2 + NH4(+). It participates in amino-acid degradation; D-alanine degradation; NH(3) and pyruvate from D-alanine: step 1/1. In terms of biological role, oxidative deamination of D-amino acids. This chain is D-amino acid dehydrogenase, found in Pseudomonas putida (strain W619).